Here is a 171-residue protein sequence, read N- to C-terminus: MVKLNGNPGEKGAKPPSVEDGFQTVPLITPLEVNHLQLSAPEKVIVKTRTEYQPEQRNKGKFRVPKIAEFTVTILVSLALAFLACIVFLVVYKAFTYDHSCPEGFVYKHKRCIPASLDAYYSSQDPSSRSRFYTVISHYSVAKQSTARAIGPWLSAAAVIHEPKPPKTQGH.

The tract at residues 1–21 (MVKLNGNPGEKGAKPPSVEDG) is disordered. The Cytoplasmic segment spans residues 1–71 (MVKLNGNPGE…FRVPKIAEFT (71 aa)). A helical; Signal-anchor for type II membrane protein membrane pass occupies residues 72–92 (VTILVSLALAFLACIVFLVVY). The Lumenal segment spans residues 93–171 (KAFTYDHSCP…EPKPPKTQGH (79 aa)).

It belongs to the NSG family.

It is found in the membrane. The protein resides in the golgi apparatus. The protein localises to the trans-Golgi network membrane. Its subcellular location is the cell projection. It localises to the dendrite. It is found in the endosome membrane. The protein resides in the early endosome membrane. The protein localises to the late endosome membrane. Its subcellular location is the lysosome lumen. It localises to the cytoplasmic vesicle membrane. It is found in the golgi stack membrane. The protein resides in the endosome. The protein localises to the multivesicular body membrane. The chain is Neuronal vesicle trafficking-associated protein 2 from Rattus norvegicus (Rat).